Here is a 92-residue protein sequence, read N- to C-terminus: Defensin alpha 4 (92 aa).

A signal peptide spans 1-19 (MKTLVLLSALVLLAFQVQA). The propeptide occupies 20-58 (DPIQNTDEETKTEEQPGEEDQAVSISFGGQEGSALHEKS). Residues 23–42 (QNTDEETKTEEQPGEEDQAV) form a disordered region. 3 cysteine pairs are disulfide-bonded: Cys64-Cys89, Cys66-Cys81, and Cys71-Cys88.

This sequence belongs to the alpha-defensin family. In terms of tissue distribution, paneth cells of the small bowel.

Its subcellular location is the secreted. It localises to the cytoplasmic vesicle. The protein localises to the secretory vesicle. Host-defense peptide that has antimicrobial activity. Exhibits activity against Gram-negative E.coli (in vitro). Probably contributes to the antimicrobial barrier function of the small bowel mucosa. The protein is Defensin alpha 4 of Mus musculus (Mouse).